A 270-amino-acid chain; its full sequence is Malonyl-[acyl-carrier protein] O-methyltransferase (270 aa).

It belongs to the methyltransferase superfamily.

The enzyme catalyses malonyl-[ACP] + S-adenosyl-L-methionine = malonyl-[ACP] methyl ester + S-adenosyl-L-homocysteine. It functions in the pathway cofactor biosynthesis; biotin biosynthesis. Its function is as follows. Converts the free carboxyl group of a malonyl-thioester to its methyl ester by transfer of a methyl group from S-adenosyl-L-methionine (SAM). It allows to synthesize pimeloyl-ACP via the fatty acid synthetic pathway. The sequence is that of Malonyl-[acyl-carrier protein] O-methyltransferase from Magnetococcus marinus (strain ATCC BAA-1437 / JCM 17883 / MC-1).